The following is a 102-amino-acid chain: Integration host factor subunit beta (102 aa).

This sequence belongs to the bacterial histone-like protein family. Heterodimer of an alpha and a beta chain.

Its function is as follows. This protein is one of the two subunits of integration host factor, a specific DNA-binding protein that functions in genetic recombination as well as in transcriptional and translational control. The sequence is that of Integration host factor subunit beta from Marinomonas sp. (strain MWYL1).